Here is a 485-residue protein sequence, read N- to C-terminus: Adenosylhomocysteinase 1 (485 aa).

Threonine 64, aspartate 139, and glutamate 205 together coordinate substrate. 206–208 (TTT) is a binding site for NAD(+). Positions 235 and 239 each coordinate substrate. NAD(+) contacts are provided by residues 271-276 (GDVGKG), glutamate 292, 348-350 (IGH), asparagine 397, histidine 404, lysine 479, 479-483 (KPPHY), and tyrosine 483.

This sequence belongs to the adenosylhomocysteinase family. Homotetramer. Requires NAD(+) as cofactor.

The catalysed reaction is S-adenosyl-L-homocysteine + H2O = L-homocysteine + adenosine. It participates in amino-acid biosynthesis; L-homocysteine biosynthesis; L-homocysteine from S-adenosyl-L-homocysteine: step 1/1. In terms of biological role, essential protein during embryogenesis. Adenosylhomocysteine is a competitive inhibitor of S-adenosyl-L-methionine-dependent methyl transferase reactions; therefore adenosylhomocysteinase may play a key role in the control of methylations via regulation of the intracellular concentration of adenosylhomocysteine. Required for DNA methylation-dependent gene silencing. This Arabidopsis thaliana (Mouse-ear cress) protein is Adenosylhomocysteinase 1.